A 429-amino-acid chain; its full sequence is Chaperone SurA (429 aa).

Positions 1–18 (MFKRIALVCALFSGICFA) are cleaved as a signal peptide. 2 consecutive PpiC domains span residues 170 to 271 (NLTY…KLVA) and 281 to 380 (ITQT…EVIA).

It is found in the periplasm. It catalyses the reaction [protein]-peptidylproline (omega=180) = [protein]-peptidylproline (omega=0). Functionally, chaperone involved in the correct folding and assembly of outer membrane proteins. Recognizes specific patterns of aromatic residues and the orientation of their side chains, which are found more frequently in integral outer membrane proteins. May act in both early periplasmic and late outer membrane-associated steps of protein maturation. The sequence is that of Chaperone SurA from Legionella pneumophila (strain Paris).